A 66-amino-acid chain; its full sequence is Sodium/potassium-transporting ATPase subunit gamma (66 aa).

A helical transmembrane segment spans residues 29 to 46; the sequence is GGLIFAGLAFVVGLLILL.

This sequence belongs to the FXYD family. In terms of assembly, regulatory subunit of the sodium/potassium-transporting ATPase which is composed of a catalytic alpha subunit, an auxiliary non-catalytic beta subunit and an additional regulatory subunit. In terms of tissue distribution, highest levels expressed in the kidney and spleen. Restricted to the basolateral membrane in renal epithelial cells and varies in its level of expression along the nephron.

The protein localises to the membrane. May be involved in forming the receptor site for cardiac glycoside binding or may modulate the transport function of the sodium ATPase. In Rattus norvegicus (Rat), this protein is Sodium/potassium-transporting ATPase subunit gamma (Fxyd2).